The following is a 366-amino-acid chain: Protein-glutamate methylesterase/protein-glutamine glutaminase of group 2 operon (366 aa).

The 118-residue stretch at 19–136 (RVLIVDDSAM…GQGLPAIMRD (118 aa)) folds into the Response regulatory domain. Asp70 carries the post-translational modification 4-aspartylphosphate. Positions 162–356 (PGASEDWIHA…ARMMLAAAAD (195 aa)) constitute a CheB-type methylesterase domain. Active-site residues include Ser175, His201, and Asp298.

The protein belongs to the CheB family. In terms of processing, phosphorylated by CheA. Phosphorylation of the N-terminal regulatory domain activates the methylesterase activity.

It localises to the cytoplasm. The catalysed reaction is [protein]-L-glutamate 5-O-methyl ester + H2O = L-glutamyl-[protein] + methanol + H(+). It carries out the reaction L-glutaminyl-[protein] + H2O = L-glutamyl-[protein] + NH4(+). Involved in chemotaxis. Part of a chemotaxis signal transduction system that modulates chemotaxis in response to various stimuli. Catalyzes the demethylation of specific methylglutamate residues introduced into the chemoreceptors (methyl-accepting chemotaxis proteins or MCP) by CheR. Also mediates the irreversible deamidation of specific glutamine residues to glutamic acid. The polypeptide is Protein-glutamate methylesterase/protein-glutamine glutaminase of group 2 operon (Cereibacter sphaeroides (Rhodobacter sphaeroides)).